We begin with the raw amino-acid sequence, 303 residues long: Thyrotroph embryonic factor (303 aa).

Disordered stretches follow at residues M1–E63 and E132–C176. S32 carries the post-translational modification Phosphoserine. The segment covering K41–L61 has biased composition (basic and acidic residues). Over residues S133–S160 the composition is skewed to low complexity. Residues D233–Y296 form the bZIP domain. Residues K235–R255 form a basic motif region. A leucine-zipper region spans residues L256–I263.

Belongs to the bZIP family. PAR subfamily. As to quaternary structure, binds DNA as a homodimer or a heterodimer. Can form a heterodimer with DBP.

Its subcellular location is the nucleus. Its function is as follows. Transcription factor that binds to and transactivates the TSHB promoter. Binds to a minimal DNA-binding sequence 5'-[TC][AG][AG]TTA[TC][AG]-3'. The sequence is that of Thyrotroph embryonic factor (TEF) from Homo sapiens (Human).